The following is a 590-amino-acid chain: Negative elongation factor D (590 aa).

Residues Tyr15–Val43 form a disordered region. A compositionally biased stretch (acidic residues) spans Trp21–Val43.

The protein belongs to the NELF-D family. In terms of assembly, the NELF complex is composed of NELFA, NELFB, NELFCD and NELFE; NELFA and NELFCD form a stable subcomplex that binds primarily through NELFCD to the N-terminus of NELFB. Binds RNA which may help to stabilize the NELF complex on nucleic acid. In vitro, the NELFA:NELFCD subcomplex binds to ssDNA and ssRNA in a sequence- and structure-dependent manner. Interacts with ARAF1. Interacts with PCF11. Interacts with NELFB. Interacts with KAT8.

Its subcellular location is the nucleus. Essential component of the NELF complex, a complex that negatively regulates the elongation of transcription by RNA polymerase II. The NELF complex, which acts via an association with the DSIF complex and causes transcriptional pausing, is counteracted by the P-TEFb kinase complex. The polypeptide is Negative elongation factor D (NELFCD) (Pongo abelii (Sumatran orangutan)).